Reading from the N-terminus, the 125-residue chain is Fluoride-specific ion channel FluC (125 aa).

A run of 4 helical transmembrane segments spans residues 1-21 (MIQA…RYYV), 32-52 (AFPW…GVFA), 68-88 (LLIT…LDAI), and 101-121 (IYIA…LAVM). 2 residues coordinate Na(+): glycine 75 and threonine 78.

The protein belongs to the fluoride channel Fluc/FEX (TC 1.A.43) family.

It is found in the cell inner membrane. The enzyme catalyses fluoride(in) = fluoride(out). Its activity is regulated as follows. Na(+) is not transported, but it plays an essential structural role and its presence is essential for fluoride channel function. In terms of biological role, fluoride-specific ion channel. Important for reducing fluoride concentration in the cell, thus reducing its toxicity. The polypeptide is Fluoride-specific ion channel FluC (Rhizobium etli (strain CIAT 652)).